Here is a 403-residue protein sequence, read N- to C-terminus: NADH-quinone oxidoreductase subunit D (403 aa).

The protein belongs to the complex I 49 kDa subunit family. In terms of assembly, NDH-1 is composed of 14 different subunits. Subunits NuoB, C, D, E, F, and G constitute the peripheral sector of the complex.

It localises to the cell membrane. The enzyme catalyses a quinone + NADH + 5 H(+)(in) = a quinol + NAD(+) + 4 H(+)(out). Functionally, NDH-1 shuttles electrons from NADH, via FMN and iron-sulfur (Fe-S) centers, to quinones in the respiratory chain. The immediate electron acceptor for the enzyme in this species is believed to be a menaquinone. Couples the redox reaction to proton translocation (for every two electrons transferred, four hydrogen ions are translocated across the cytoplasmic membrane), and thus conserves the redox energy in a proton gradient. The polypeptide is NADH-quinone oxidoreductase subunit D (Amoebophilus asiaticus (strain 5a2)).